We begin with the raw amino-acid sequence, 559 residues long: Formate--tetrahydrofolate ligase (559 aa).

68–75 (TPAGEGKS) provides a ligand contact to ATP.

This sequence belongs to the formate--tetrahydrofolate ligase family.

It catalyses the reaction (6S)-5,6,7,8-tetrahydrofolate + formate + ATP = (6R)-10-formyltetrahydrofolate + ADP + phosphate. Its pathway is one-carbon metabolism; tetrahydrofolate interconversion. In Bacillus licheniformis (strain ATCC 14580 / DSM 13 / JCM 2505 / CCUG 7422 / NBRC 12200 / NCIMB 9375 / NCTC 10341 / NRRL NRS-1264 / Gibson 46), this protein is Formate--tetrahydrofolate ligase.